The following is a 389-amino-acid chain: Protein WALLS ARE THIN 1 (389 aa).

A run of 10 helical transmembrane segments spans residues 18–38 (LQLH…HVVS), 49–69 (LVFP…FAYF), 76–96 (PAIT…GITA), 111–131 (TFAS…AALL), 143–163 (GISK…ITLY), 198–218 (WTLG…WLVF), 230–250 (LSVT…IAAF), 266–286 (LFTI…VQIW), 294–314 (VFVA…ASIA), and 319–339 (FYLG…FVLY). 2 consecutive EamA domains span residues 32–161 (AGFH…SVIT) and 210–339 (LSWS…FVLY). At S372 the chain carries Phosphoserine.

This sequence belongs to the drug/metabolite transporter (DMT) superfamily. Plant drug/metabolite exporter (P-DME) (TC 2.A.7.4) family. As to expression, mostly expressed in stems and hypocotyls, also present in seedlings, root, leaves, flowers and siliques. Ubiquitous, mostly expressed in vascular tissues and secondary wall-forming cells, including developing xylem vessels and fibers.

The protein localises to the vacuole membrane. Required for secondary wall formation in fibers, especially in short days conditions. Promotes indole metabolism and transport (e.g. tryptophan, neoglucobrassicin and auxin (indole-3-acetic acid)). May prevent salicylic-acid (SA) accumulation. This Arabidopsis thaliana (Mouse-ear cress) protein is Protein WALLS ARE THIN 1 (WAT1).